A 359-amino-acid chain; its full sequence is Tyrosine-protein phosphatase non-receptor type 7 (359 aa).

A disordered region spans residues M1 to K33. The tract at residues L38–D51 is interaction with MAP kinases. Residue S44 is modified to Phosphoserine. T66 is modified (phosphothreonine). Phosphoserine is present on residues S93 and S143. Residues L97–Y349 enclose the Tyrosine-protein phosphatase domain. Residues D257, C290–R296, and Q334 each bind substrate. C290 acts as the Phosphocysteine intermediate in catalysis. C290 bears the Cysteine sulfenic acid (-SOH) mark.

The protein belongs to the protein-tyrosine phosphatase family. Non-receptor class subfamily. In terms of processing, oxidized at active site cysteine. Treatment with pervanadate (vanadate and H(2)O(2)) or with antigen enhanced oxidation of active site cysteine. In terms of tissue distribution, expressed in bone marrow-derived mast cells.

The protein resides in the cytoplasm. Its subcellular location is the cytoskeleton. The catalysed reaction is O-phospho-L-tyrosyl-[protein] + H2O = L-tyrosyl-[protein] + phosphate. Inhibited upon FCER1A triggering. In terms of biological role, may play a role in the regulation of T and B-lymphocyte development and signal transduction. The sequence is that of Tyrosine-protein phosphatase non-receptor type 7 (Ptpn7) from Mus musculus (Mouse).